We begin with the raw amino-acid sequence, 228 residues long: NAD(P)H-hydrate epimerase (228 aa).

One can recognise a YjeF N-terminal domain in the interval 9-209; that stretch reads VRAVERLAHR…LLGLTPAFLA (201 aa). 53-57 provides a ligand contact to (6S)-NADPHX; the sequence is NNGGD. The K(+) site is built by N54 and D115. Residues 119–125 and D148 contribute to the (6S)-NADPHX site; that span reads GIGLARP. K(+) is bound at residue S151.

The protein belongs to the NnrE/AIBP family. K(+) is required as a cofactor.

The enzyme catalyses (6R)-NADHX = (6S)-NADHX. It catalyses the reaction (6R)-NADPHX = (6S)-NADPHX. In terms of biological role, catalyzes the epimerization of the S- and R-forms of NAD(P)HX, a damaged form of NAD(P)H that is a result of enzymatic or heat-dependent hydration. This is a prerequisite for the S-specific NAD(P)H-hydrate dehydratase to allow the repair of both epimers of NAD(P)HX. The protein is NAD(P)H-hydrate epimerase of Bordetella bronchiseptica (strain ATCC BAA-588 / NCTC 13252 / RB50) (Alcaligenes bronchisepticus).